We begin with the raw amino-acid sequence, 334 residues long: Methionyl-tRNA formyltransferase (334 aa).

111 to 114 (SILP) contacts (6S)-5,6,7,8-tetrahydrofolate.

The protein belongs to the Fmt family.

The catalysed reaction is L-methionyl-tRNA(fMet) + (6R)-10-formyltetrahydrofolate = N-formyl-L-methionyl-tRNA(fMet) + (6S)-5,6,7,8-tetrahydrofolate + H(+). Its function is as follows. Attaches a formyl group to the free amino group of methionyl-tRNA(fMet). The formyl group appears to play a dual role in the initiator identity of N-formylmethionyl-tRNA by promoting its recognition by IF2 and preventing the misappropriation of this tRNA by the elongation apparatus. The protein is Methionyl-tRNA formyltransferase of Trichormus variabilis (strain ATCC 29413 / PCC 7937) (Anabaena variabilis).